Reading from the N-terminus, the 358-residue chain is tRNA-specific 2-thiouridylase MnmA (358 aa).

ATP is bound by residues 22-29 (LVSGGIDS) and Phe-48. The Nucleophile role is filled by Cys-105. Cys-105 and Cys-201 are disulfide-bonded. Gly-129 provides a ligand contact to ATP. The interval 151–153 (KEQ) is interaction with tRNA. The active-site Cysteine persulfide intermediate is Cys-201. The segment at 306 to 307 (RY) is interaction with tRNA.

It belongs to the MnmA/TRMU family.

Its subcellular location is the cytoplasm. It carries out the reaction S-sulfanyl-L-cysteinyl-[protein] + uridine(34) in tRNA + AH2 + ATP = 2-thiouridine(34) in tRNA + L-cysteinyl-[protein] + A + AMP + diphosphate + H(+). Catalyzes the 2-thiolation of uridine at the wobble position (U34) of tRNA, leading to the formation of s(2)U34. The chain is tRNA-specific 2-thiouridylase MnmA from Desulfosudis oleivorans (strain DSM 6200 / JCM 39069 / Hxd3) (Desulfococcus oleovorans).